The sequence spans 308 residues: D-alanine--D-alanine ligase (308 aa).

Positions 105 to 302 constitute an ATP-grasp domain; the sequence is KAIFRSLGLA…FPDLCERILD (198 aa). 133-188 contributes to the ATP binding site; that stretch reads DLPFGLPCVVKPAGEGSSVGVHLVNEAAELGPACRDAASHAGDVIVERYVKGTEVD. Mg(2+)-binding residues include D256, E269, and N271.

It belongs to the D-alanine--D-alanine ligase family. It depends on Mg(2+) as a cofactor. Mn(2+) is required as a cofactor.

Its subcellular location is the cytoplasm. It carries out the reaction 2 D-alanine + ATP = D-alanyl-D-alanine + ADP + phosphate + H(+). The protein operates within cell wall biogenesis; peptidoglycan biosynthesis. Cell wall formation. The protein is D-alanine--D-alanine ligase of Anaeromyxobacter dehalogenans (strain 2CP-1 / ATCC BAA-258).